The chain runs to 256 residues: DNA repair protein RecO (256 aa).

This sequence belongs to the RecO family.

In terms of biological role, involved in DNA repair and RecF pathway recombination. The chain is DNA repair protein RecO from Thiobacillus denitrificans (strain ATCC 25259 / T1).